Consider the following 62-residue polypeptide: E3 SUMO-protein ligase EGR2 (62 aa).

C2H2-type zinc fingers lie at residues 1–21, 27–49, and 55–62; these read AEGC…IRIH, FQCA…IRTH, and FACDYCGR.

The protein belongs to the EGR C2H2-type zinc-finger protein family. In terms of assembly, interacts with HCFC1. Interacts with WWP2. Interacts with UBC9. Interacts with CITED1. Interacts (via phosphorylated form) with SFN. Ubiquitinated by WWP2 leading to proteasomal degradation. In terms of processing, acetylated. May be deacetylated by HDAC6, HDAC10 or SIRT1.

Its subcellular location is the nucleus. It participates in protein modification; protein sumoylation. Functionally, sequence-specific DNA-binding transcription factor. Plays a role in hindbrain segmentation by regulating the expression of a subset of homeobox containing genes and in Schwann cell myelination by regulating the expression of genes involved in the formation and maintenance of myelin. Binds to two EGR2-consensus sites EGR2A (5'-CTGTAGGAG-3') and EGR2B (5'-ATGTAGGTG-3') in the HOXB3 enhancer and promotes HOXB3 transcriptional activation. Binds to specific DNA sites located in the promoter region of HOXA4, HOXB2 and ERBB2. Regulates hindbrain segmentation by controlling the expression of Hox genes, such as HOXA4, HOXB3 and HOXB2, and thereby specifying odd and even rhombomeres. Promotes the expression of HOXB3 in the rhombomere r5 in the hindbrain. Regulates myelination in the peripheral nervous system after birth, possibly by regulating the expression of myelin proteins, such as MPZ, and by promoting the differentiation of Schwann cells. Involved in the development of the jaw openener musculature, probably by playing a role in its innervation through trigeminal motor neurons. May play a role in adipogenesis, possibly by regulating the expression of CEBPB. In terms of biological role, E3 SUMO-protein ligase helping SUMO1 conjugation to its coregulators NAB1 and NAB2, whose sumoylation down-regulates EGR2 transcriptional activity. In Cerdocyon thous (Crab-eating fox), this protein is E3 SUMO-protein ligase EGR2 (EGR2).